The following is a 464-amino-acid chain: Argininosuccinate lyase (464 aa).

It belongs to the lyase 1 family. Argininosuccinate lyase subfamily.

Its subcellular location is the cytoplasm. It carries out the reaction 2-(N(omega)-L-arginino)succinate = fumarate + L-arginine. Its pathway is amino-acid biosynthesis; L-arginine biosynthesis; L-arginine from L-ornithine and carbamoyl phosphate: step 3/3. In Pseudomonas syringae pv. syringae (strain B728a), this protein is Argininosuccinate lyase.